The following is a 283-amino-acid chain: Elongation factor Ts (283 aa).

The tract at residues 80-83 (TDFV) is involved in Mg(2+) ion dislocation from EF-Tu.

It belongs to the EF-Ts family.

It is found in the cytoplasm. Functionally, associates with the EF-Tu.GDP complex and induces the exchange of GDP to GTP. It remains bound to the aminoacyl-tRNA.EF-Tu.GTP complex up to the GTP hydrolysis stage on the ribosome. The sequence is that of Elongation factor Ts from Histophilus somni (strain 129Pt) (Haemophilus somnus).